Consider the following 101-residue polypeptide: Protein Tat (101 aa).

The interaction with human CREBBP stretch occupies residues 1 to 24 (MDPVDPNLEPWNHPGSQPKTPCNK). The tract at residues 1–48 (MDPVDPNLEPWNHPGSQPKTPCNKCFCKVCCWHCQVCFLNKGLGISYG) is transactivation. Positions 22, 25, and 27 each coordinate Zn(2+). The cysteine-rich stretch occupies residues 22-37 (CNKCFCKVCCWHCQVC). N6-acetyllysine; by host PCAF is present on lysine 28. Positions 30, 33, 34, and 37 each coordinate Zn(2+). The tract at residues 38–48 (FLNKGLGISYG) is core. The segment covering 48–57 (GRKKRKHRRG) has biased composition (basic residues). The interval 48 to 101 (GRKKRKHRRGTPQSSKGHQDPVPKQPLPTTRGNPTGPKESKKEVASKAEADQCD) is disordered. The short motif at 49 to 57 (RKKRKHRRG) is the Nuclear localization signal, RNA-binding (TAR), and protein transduction element. The interval 49–86 (RKKRKHRRGTPQSSKGHQDPVPKQPLPTTRGNPTGPKE) is interaction with the host capping enzyme RNGTT. 2 positions are modified to N6-acetyllysine; by host EP300 and GCN5L2: lysine 50 and lysine 51. Arginine 52 is modified (asymmetric dimethylarginine; by host PRMT6). A Glycyl lysine isopeptide (Lys-Gly) (interchain with G-Cter in ubiquitin) cross-link involves residue lysine 71. Positions 85-101 (KESKKEVASKAEADQCD) are enriched in basic and acidic residues.

Belongs to the lentiviruses Tat family. In terms of assembly, interacts with host CCNT1. Associates with the P-TEFb complex composed at least of Tat, P-TEFb (CDK9 and CCNT1), TAR RNA, RNA Pol II. Recruits the HATs CREBBP, TAF1/TFIID, EP300, PCAF and GCN5L2. Interacts with host KAT5/Tip60; this interaction targets the latter to degradation. Interacts with the host deacetylase SIRT1. Interacts with host capping enzyme RNGTT; this interaction stimulates RNGTT. Binds to host KDR, and to the host integrins ITGAV/ITGB3 and ITGA5/ITGB1. Interacts with host KPNB1/importin beta-1 without previous binding to KPNA1/importin alpha-1. Interacts with EIF2AK2. Interacts with host nucleosome assembly protein NAP1L1; this interaction may be required for the transport of Tat within the nucleus, since the two proteins interact at the nuclear rim. Interacts with host C1QBP/SF2P32; this interaction involves lysine-acetylated Tat. Interacts with the host chemokine receptors CCR2, CCR3 and CXCR4. Interacts with host DPP4/CD26; this interaction may trigger an anti-proliferative effect. Interacts with host LDLR. Interacts with the host extracellular matrix metalloproteinase MMP1. Interacts with host PRMT6; this interaction mediates Tat's methylation. Interacts with, and is ubiquitinated by MDM2/Hdm2. Interacts with host PSMC3 and HTATIP2. Interacts with STAB1; this interaction may overcome SATB1-mediated repression of IL2 and IL2RA (interleukin) in T cells by binding to the same domain than HDAC1. Interacts (when acetylated) with human CDK13, thereby increasing HIV-1 mRNA splicing and promoting the production of the doubly spliced HIV-1 protein Nef. Interacts with host TBP; this interaction modulates the activity of transcriptional pre-initiation complex. Interacts with host RELA. Interacts with host PLSCR1; this interaction negatively regulates Tat transactivation activity by altering its subcellular distribution. In terms of processing, asymmetrical arginine methylation by host PRMT6 seems to diminish the transactivation capacity of Tat and affects the interaction with host CCNT1. Post-translationally, acetylation by EP300, CREBBP, GCN5L2/GCN5 and PCAF regulates the transactivation activity of Tat. EP300-mediated acetylation of Lys-50 promotes dissociation of Tat from the TAR RNA through the competitive binding to PCAF's bromodomain. In addition, the non-acetylated Tat's N-terminus can also interact with PCAF. PCAF-mediated acetylation of Lys-28 enhances Tat's binding to CCNT1. Lys-50 is deacetylated by SIRT1. Polyubiquitination by host MDM2 does not target Tat to degradation, but activates its transactivation function and fosters interaction with CCNT1 and TAR RNA. In terms of processing, phosphorylated by EIF2AK2 on serine and threonine residues adjacent to the basic region important for TAR RNA binding and function. Phosphorylation of Tat by EIF2AK2 is dependent on the prior activation of EIF2AK2 by dsRNA.

It is found in the host nucleus. It localises to the host nucleolus. The protein resides in the host cytoplasm. The protein localises to the secreted. Functionally, transcriptional activator that increases RNA Pol II processivity, thereby increasing the level of full-length viral transcripts. Recognizes a hairpin structure at the 5'-LTR of the nascent viral mRNAs referred to as the transactivation responsive RNA element (TAR) and recruits the cyclin T1-CDK9 complex (P-TEFb complex) that will in turn hyperphosphorylate the RNA polymerase II to allow efficient elongation. The CDK9 component of P-TEFb and other Tat-activated kinases hyperphosphorylate the C-terminus of RNA Pol II that becomes stabilized and much more processive. Other factors such as HTATSF1/Tat-SF1, SUPT5H/SPT5, and HTATIP2 are also important for Tat's function. Besides its effect on RNA Pol II processivity, Tat induces chromatin remodeling of proviral genes by recruiting the histone acetyltransferases (HATs) CREBBP, EP300 and PCAF to the chromatin. This also contributes to the increase in proviral transcription rate, especially when the provirus integrates in transcriptionally silent region of the host genome. To ensure maximal activation of the LTR, Tat mediates nuclear translocation of NF-kappa-B by interacting with host RELA. Through its interaction with host TBP, Tat may also modulate transcription initiation. Tat can reactivate a latently infected cell by penetrating in it and transactivating its LTR promoter. In the cytoplasm, Tat is thought to act as a translational activator of HIV-1 mRNAs. Extracellular circulating Tat can be endocytosed by surrounding uninfected cells via the binding to several surface receptors such as CD26, CXCR4, heparan sulfate proteoglycans (HSPG) or LDLR. Neurons are rarely infected, but they internalize Tat via their LDLR. Through its interaction with nuclear HATs, Tat is potentially able to control the acetylation-dependent cellular gene expression. Modulates the expression of many cellular genes involved in cell survival, proliferation or in coding for cytokines or cytokine receptors. Tat plays a role in T-cell and neurons apoptosis. Tat induced neurotoxicity and apoptosis probably contribute to neuroAIDS. Circulating Tat also acts as a chemokine-like and/or growth factor-like molecule that binds to specific receptors on the surface of the cells, affecting many cellular pathways. In the vascular system, Tat binds to ITGAV/ITGB3 and ITGA5/ITGB1 integrins dimers at the surface of endothelial cells and competes with bFGF for heparin-binding sites, leading to an excess of soluble bFGF. The polypeptide is Protein Tat (Homo sapiens (Human)).